A 285-amino-acid polypeptide reads, in one-letter code: HTH-type transcriptional regulator MurR (285 aa).

Residues 1 to 77 (MLYLTKISNA…MALIGEYSAS (77 aa)) form the HTH rpiR-type domain. Positions 37 to 56 (SRQMAKQLGISQSSIVKFAQ) form a DNA-binding region, H-T-H motif. One can recognise an SIS domain in the interval 128 to 268 (IIDVISKAQF…FVGLVQLNDV (141 aa)).

Homotetramer.

The protein operates within amino-sugar metabolism; N-acetylmuramate degradation [regulation]. Its function is as follows. Represses the expression of the murPQ operon involved in the uptake and degradation of N-acetylmuramic acid (MurNAc). Binds to two adjacent inverted repeats within the operator region. MurNAc 6-phosphate, the substrate of MurQ, is the specific inducer that weakens binding of MurR to the operator. The polypeptide is HTH-type transcriptional regulator MurR (Escherichia coli (strain B / BL21-DE3)).